Here is a 435-residue protein sequence, read N- to C-terminus: tRNA-2-methylthio-N(6)-dimethylallyladenosine synthase (435 aa).

One can recognise an MTTase N-terminal domain in the interval 1–117; it reads MKYFIKTYGC…MPKLLEDVKV (117 aa). Residues cysteine 10, cysteine 46, cysteine 80, cysteine 156, cysteine 160, and cysteine 163 each contribute to the [4Fe-4S] cluster site. The region spanning 142 to 370 is the Radical SAM core domain; the sequence is RDNSYCAYVT…LEIQKAITSK (229 aa). Positions 373–433 constitute a TRAM domain; the sequence is QRYKNTVQKV…FQSLDGVVQN (61 aa).

Belongs to the methylthiotransferase family. MiaB subfamily. As to quaternary structure, monomer. It depends on [4Fe-4S] cluster as a cofactor.

The protein resides in the cytoplasm. The enzyme catalyses N(6)-dimethylallyladenosine(37) in tRNA + (sulfur carrier)-SH + AH2 + 2 S-adenosyl-L-methionine = 2-methylsulfanyl-N(6)-dimethylallyladenosine(37) in tRNA + (sulfur carrier)-H + 5'-deoxyadenosine + L-methionine + A + S-adenosyl-L-homocysteine + 2 H(+). Catalyzes the methylthiolation of N6-(dimethylallyl)adenosine (i(6)A), leading to the formation of 2-methylthio-N6-(dimethylallyl)adenosine (ms(2)i(6)A) at position 37 in tRNAs that read codons beginning with uridine. This Hydrogenobaculum sp. (strain Y04AAS1) protein is tRNA-2-methylthio-N(6)-dimethylallyladenosine synthase.